Reading from the N-terminus, the 546-residue chain is Chaperonin GroEL (546 aa).

ATP is bound by residues 30–33, Lys51, 87–91, Gly415, and Asp496; these read TLGP and DGTTT. A disordered region spans residues 526-546; it reads PEDKPAPAMPGGMGGMGGMDF. Over residues 536-546 the composition is skewed to gly residues; sequence GGMGGMGGMDF.

The protein belongs to the chaperonin (HSP60) family. Forms a cylinder of 14 subunits composed of two heptameric rings stacked back-to-back. Interacts with the co-chaperonin GroES.

It is found in the cytoplasm. The catalysed reaction is ATP + H2O + a folded polypeptide = ADP + phosphate + an unfolded polypeptide.. In terms of biological role, together with its co-chaperonin GroES, plays an essential role in assisting protein folding. The GroEL-GroES system forms a nano-cage that allows encapsulation of the non-native substrate proteins and provides a physical environment optimized to promote and accelerate protein folding. The chain is Chaperonin GroEL from Zymomonas mobilis subsp. mobilis (strain ATCC 31821 / ZM4 / CP4).